The sequence spans 83 residues: Apolipoprotein C-I, basic form (83 aa).

The first 26 residues, 1 to 26, serve as a signal peptide directing secretion; that stretch reads MRLFLSLPVLVVVLSMVLEGPAPAQG.

The protein belongs to the apolipoprotein C1 family.

It is found in the secreted. Its function is as follows. Inhibitor of lipoprotein binding to the low density lipoprotein (LDL) receptor, LDL receptor-related protein, and very low density lipoprotein (VLDL) receptor. Associates with high density lipoproteins (HDL) and the triacylglycerol-rich lipoproteins in the plasma and makes up about 10% of the protein of the VLDL and 2% of that of HDL. Appears to interfere directly with fatty acid uptake and is also the major plasma inhibitor of cholesteryl ester transfer protein (CETP). Binds free fatty acids and reduces their intracellular esterification. Modulates the interaction of APOE with beta-migrating VLDL and inhibits binding of beta-VLDL to the LDL receptor-related protein. The chain is Apolipoprotein C-I, basic form (APOC1B) from Cercocebus atys (Sooty mangabey).